We begin with the raw amino-acid sequence, 294 residues long: ATP phosphoribosyltransferase (294 aa).

This sequence belongs to the ATP phosphoribosyltransferase family. Long subfamily. The cofactor is Mg(2+).

It is found in the cytoplasm. The catalysed reaction is 1-(5-phospho-beta-D-ribosyl)-ATP + diphosphate = 5-phospho-alpha-D-ribose 1-diphosphate + ATP. It participates in amino-acid biosynthesis; L-histidine biosynthesis; L-histidine from 5-phospho-alpha-D-ribose 1-diphosphate: step 1/9. Feedback inhibited by histidine. Catalyzes the condensation of ATP and 5-phosphoribose 1-diphosphate to form N'-(5'-phosphoribosyl)-ATP (PR-ATP). Has a crucial role in the pathway because the rate of histidine biosynthesis seems to be controlled primarily by regulation of HisG enzymatic activity. The chain is ATP phosphoribosyltransferase from Chlorobaculum parvum (strain DSM 263 / NCIMB 8327) (Chlorobium vibrioforme subsp. thiosulfatophilum).